The chain runs to 148 residues: Arginine repressor (148 aa).

This sequence belongs to the ArgR family.

It is found in the cytoplasm. It functions in the pathway amino-acid biosynthesis; L-arginine biosynthesis [regulation]. Functionally, regulates arginine biosynthesis genes. This Acidobacterium capsulatum (strain ATCC 51196 / DSM 11244 / BCRC 80197 / JCM 7670 / NBRC 15755 / NCIMB 13165 / 161) protein is Arginine repressor.